Reading from the N-terminus, the 81-residue chain is Protein Vpu (81 aa).

The Extracellular portion of the chain corresponds to 1 to 7 (MQSLQIL). A helical transmembrane segment spans residues 8 to 28 (AIVSLVVVAIIAIVVWTIVLI). The Cytoplasmic portion of the chain corresponds to 29 to 81 (EYRKILRQRKIDRLFDRIREKAEDSGNESERDQEELSALVEMGHLAPWDVDDL). A phosphoserine; by host CK2 mark is found at S53 and S57.

This sequence belongs to the HIV-1 VPU protein family. Homopentamer. Interacts with host CD4 and BRTC; these interactions induce proteasomal degradation of CD4. Interacts with host BST2; this interaction leads to the degradation of host BST2. Interacts with host FBXW11. Interacts with host AP1M1; this interaction plays a role in the mistrafficking and subsequent degradation of host BST2. Interacts with host RANBP2; this interaction allows Vpu to down-regulate host BLM sumoylation. In terms of processing, phosphorylated by host CK2. This phosphorylation is necessary for interaction with human BTRC and degradation of CD4.

It localises to the host membrane. Its activity is regulated as follows. Ion channel activity is inhibited by hexamethylene amiloride in vitro. Functionally, enhances virion budding by targeting host CD4 and Tetherin/BST2 to proteasome degradation. Degradation of CD4 prevents any unwanted premature interactions between viral Env and its host receptor CD4 in the endoplasmic reticulum. Degradation of antiretroviral protein Tetherin/BST2 is important for virion budding, as BST2 tethers new viral particles to the host cell membrane. Mechanistically, Vpu bridges either CD4 or BST2 to BTRC, a substrate recognition subunit of the Skp1/Cullin/F-box protein E3 ubiquitin ligase, induces their ubiquitination and subsequent proteasomal degradation. The alteration of the E3 ligase specificity by Vpu seems to promote the degradation of host IKBKB, leading to NF-kappa-B down-regulation and subsequent apoptosis. Acts as a viroporin that forms an oligomeric ion channel in membranes. Modulates the host DNA repair mechanisms to promote degradation of nuclear viral cDNA in cells that are already productively infected in order to suppress immune sensing and proviral hyper-integration (superinfection). Manipulates PML-NBs and modulates SUMOylation of host BLM protein thereby enhancing its DNA-end processing activity toward viral unintegrated linear DNA. Also inhibits RAD52-mediated homologous repair of viral cDNA, preventing the generation of dead-end circular forms of single copies of the long terminal repeat and permitting sustained nucleolytic attack. In Homo sapiens (Human), this protein is Protein Vpu.